Consider the following 1364-residue polypeptide: Serine protease EatA (1364 aa).

The N-terminal stretch at 1–56 (MNKVFSLKYSFLAKGFIAVSELARRVSVKGKLKSASSIIISPITIAIVSYAPPSLA) is a signal peptide. Positions 57 to 307 (ATVNADISYQ…VVTTQDFLHQ (251 aa)) constitute a Peptidase S6 domain. Residues His-134, Asp-162, and Ser-267 each act as charge relay system in the active site. The region spanning 1098 to 1364 (DSQGDAGGWA…SINANFRYYF (267 aa)) is the Autotransporter domain.

In terms of processing, cleaved to release the mature protein from the outer membrane.

It is found in the periplasm. It localises to the secreted. The protein localises to the cell surface. The protein resides in the cell outer membrane. Its activity is regulated as follows. Inhibited by phenylmethylsulfonyl fluoride. In terms of biological role, autotransporter serine protease probably involved in virulence. The protein is Serine protease EatA (eatA) of Escherichia coli O78:H11 (strain H10407 / ETEC).